Here is a 67-residue protein sequence, read N- to C-terminus: MNNNNVYSLNNFDFLARSFARMQAEGRPVDIQAVTGNMDEEHRDWFCKRYALYCQQATQAKKLELEH.

The protein belongs to the GlgS family.

In terms of biological role, major determinant of cell surface composition. Negatively regulates motility, adhesion and synthesis of biofilm exopolysaccharides. This Salmonella paratyphi A (strain ATCC 9150 / SARB42) protein is Surface composition regulator.